The following is a 256-amino-acid chain: Phosphonates import ATP-binding protein PhnC (256 aa).

Residues 2–246 (LKVIQLDKTY…VLQHIYRQPD (245 aa)) enclose the ABC transporter domain. 35-42 (GPSGAGKT) contributes to the ATP binding site.

This sequence belongs to the ABC transporter superfamily. Phosphonates importer (TC 3.A.1.9.1) family. In terms of assembly, the complex is composed of two ATP-binding proteins (PhnC), two transmembrane proteins (PhnE) and a solute-binding protein (PhnD).

It localises to the cell membrane. The catalysed reaction is phosphonate(out) + ATP + H2O = phosphonate(in) + ADP + phosphate + H(+). In terms of biological role, part of the ABC transporter complex PhnCDE involved in phosphonates import. Responsible for energy coupling to the transport system. The chain is Phosphonates import ATP-binding protein PhnC from Lactiplantibacillus plantarum (strain ATCC BAA-793 / NCIMB 8826 / WCFS1) (Lactobacillus plantarum).